A 141-amino-acid polypeptide reads, in one-letter code: Hemoglobin subunit alpha-2 (141 aa).

The Globin domain occupies 1–141 (VLSSQDKANV…VKHVLTSKYR (141 aa)). O2 is bound at residue His58. Residue His87 coordinates heme b.

Belongs to the globin family. As to quaternary structure, minor hemoglobin is a heterotetramer of two alpha-2 chains and two beta-2 chains. Red blood cells.

Its function is as follows. Involved in oxygen transport from the lung to the various peripheral tissues. The protein is Hemoglobin subunit alpha-2 of Triturus cristatus (Great crested newt).